Reading from the N-terminus, the 2177-residue chain is MEEILRKLQKEASGSKYKAIKESCTWALETLGGLDTIVKIPPHVLREKCLLPLQLALESKNVKLAQHALAGMQKLLSEERFVSMETDSDEKQLLNQILNAVKVTPSLNEDLQVEVMKVLLCITYTPTFDLNGSAVLKIAEVCIETYISSCHQRSINTAVRATLSQMLSDLTLQLRQRQENTIIENPDVPQDFGNQGSTVESLCDDVVSVLTVLCEKLQAAINDSQQLQLLYLECILSVLSSSSSSMHLHRRFTDLIWKNLCPALIVILGNPIHDKTITSAHTSSTSTSLESDSASPGVSDHGRGSGCSCTAPALSGPVARTIYYIAAELVRLVGSVDSMKPVLQSLYHRVLLYPPPQHRVEAIKIMKEILGSPQRLCDLAGPSSTESESRKRSISKRKSHLDLLKLIMDGMTEACIKGGIEACYAAVSCVCTLLGALDELSQGKGLSEGQVQLLLLRLEELKDGAEWSRDSMEINEADFRWQRRVLSSEHTPWESGNERSLDISISVTTDTGQTTLEGELGQTTPEDHSGNHKNSLKSPAIPEGKETLSKVLETEAVDQPDVVQRSHTVPYPDITNFLSVDCRTRSYGSRYSESNFSVDDQDLSRTEFDSCDQYSMAAEKDSGRSDVSDIGSDNCSLADEEQTPRDCLGHRSLRTAALSLKLLKNQEADQHSARLFIQSLEGLLPRLLSLSNVEEVDTALQNFASTFCSGMMHSPGFDGNSSLSFQMLMNADSLYTAAHCALLLNLKLSHGDYYRKRPTLAPGVMKDFMKQVQTSGVLMVFSQAWIEELYHQVLDRNMLGEAGYWGSPEDNSLPLITMLTDIDGLESSAIGGQLMASAATESPFAQSRRIDDSTVAGVAFARYILVGCWKNLIDTLSTPLTGRMAGSSKGLAFILGAEGIKEQNQKERDAICMSLDGLRKAARLSCALGVAANCASALAQMAAASCVQEEKEEREAQEPSDAITQVKLKVEQKLEQIGKVQGVWLHTAHVLCMEAILSVGLEMGSHNPDCWPHVFRVCEYVGTLEHNHFSDGASQPPLTISQPQKATGSAGLLGDPECEGSPPEHSPEQGRSLSTAPVVQPLSIQDLVREGSRGRASDFRGGSLMSGSSAAKVVLTLSTQADRLFEDATDKLNLMALGGFLYQLKKASQSQLFHSVTDTVDYSLAMPGEVKSTQDRKSALHLFRLGNAMLRIVRSKARPLLHVMRCWSLVAPHLVEAACHKERHVSQKAVSFIHDILTEVLTDWNEPPHFHFNEALFRPFERIMQLELCDEDVQDQVVTSIGELVEVCSTQIQSGWRPLFSALETVHGGNKSEMKEYLVGDYSMGKGQAPVFDVFEAFLNTDNIQVFANAATSYIMCLMKFVKGLGEVDCKEIGDCAPAPGAPSTDLCLPALDYLRRCSQLLAKIYKMPLKPIFLSGRLAGLPRRLQEQSASSEDGIESVLSDFDDDTGLIEVWIILLEQLTAAVSNCPRQHQPPTLDLLFELLRDVTKTPGPGFGIYAVVHLLLPVMSVWLRRSHKDHSYWDMASANFKHAIGLSCELVVEHIQSFLHSDIRYESMINTMLKDLFELLVACVAKPTETISRVGCSCIRYVLVTAGPVFTEEMWRLACCALQDAFSATLKPVKDLLGCFHSGTESFSGEGCQVRVAAPSSSPSAEAEYWRIRAMAQQVFMLDTQCSPKTPNNFDHAQSCQLIIELPPDEKPNGHTKKSVSFREIVVSLLSHQVLLQNLYDILLEEFVKGPSPGEEKTIQVPEAKLAGFLRYISMQNLAVIFDLLLDSYRTAREFDTSPGLKCLLKKVSGIGGAANLYRQSAMSFNIYFHALVCAVLTNQETITAEQVKKVLFEDDERSTDSSQQCSSEDEDIFEETAQVSPPRGKEKRQWRARMPLLSVQPVSNADWVWLVKRLHKLCMELCNNYIQMHLDLENCMEEPPIFKGDPFFILPSFQSESSTPSTGGFSGKETPSEDDRSQSREHMGESLSLKAGGGDLLLPPSPKVEKKDPSRKKEWWENAGNKIYTMAADKTISKLMTEYKKRKQQHNLSAFPKEVKVEKKGEPLGPRGQDSPLLQRPQHLMDQGQMRHSFSAGPELLRQDKRPRSGSTGSSLSVSVRDAEAQIQAWTNMVLTVLNQIQILPDQTFTALQPAVFPCISQLTCHVTDIRVRQAVREWLGRVGRVYDIIV.

A compositionally biased stretch (low complexity) spans 282 to 295; sequence TSSTSTSLESDSAS. The segment at 282–301 is disordered; it reads TSSTSTSLESDSASPGVSDH. Phosphoserine is present on S471. Residues 511-524 show a composition bias toward polar residues; sequence TGQTTLEGELGQTT. 3 disordered regions span residues 511-542, 617-636, and 1031-1076; these read TGQT…PAIP, AAEK…DNCS, and DGAS…LSTA. The 214-residue stretch at 583 to 796 folds into the SEC7 domain; that stretch reads RTRSYGSRYS…EELYHQVLDR (214 aa). Residues 618-627 are compositionally biased toward basic and acidic residues; it reads AEKDSGRSDV. Residues S632 and S636 each carry the phosphoserine modification. Positions 1032-1047 are enriched in polar residues; sequence GASQPPLTISQPQKAT. S1049 is subject to Phosphoserine. A helical transmembrane segment spans residues 1492–1512; the sequence is GPGFGIYAVVHLLLPVMSVWL. Disordered regions lie at residues 1848–1877, 1946–2004, and 2033–2064; these read STDS…GKEK, ESST…RKKE, and KQQH…SPLL. Residues 1960 to 1974 show a composition bias toward basic and acidic residues; sequence TPSEDDRSQSREHMG. S1991 carries the phosphoserine modification. Composition is skewed to basic and acidic residues over residues 1993–2004 and 2043–2052; these read KVEKKDPSRKKE and KEVKVEKKGE. 5 positions are modified to phosphoserine: S2079, S2081, S2095, S2101, and S2103. Residues 2082-2103 are disordered; that stretch reads AGPELLRQDKRPRSGSTGSSLS.

Interacts with PHB2. As to expression, expressed in breast cancer cell lines. Not expressed in normal tissues such as duct, mammary gland, lung, heart, liver, kidnay, bone marrow.

It is found in the cytoplasm. Its subcellular location is the cytoplasmic vesicle. The protein localises to the secretory vesicle. It localises to the secretory vesicle membrane. Participates in the regulation of systemic glucose homeostasis, where it negatively regulates insulin granule biogenesis in pancreatic islet beta cells. Also regulates glucagon granule production in pancreatic alpha cells. Inhibits nuclear translocation of the transcriptional coregulator PHB2 and may enhance estrogen receptor alpha (ESR1) transcriptional activity in breast cancer cells. This is Brefeldin A-inhibited guanine nucleotide-exchange protein 3 from Homo sapiens (Human).